We begin with the raw amino-acid sequence, 651 residues long: NADH oxidase (651 aa).

An FMN-binding site is contributed by Q104. Residue Y175 is the Proton donor of the active site. FMN-binding positions include R223 and 320–321 (GR). [4Fe-4S] cluster contacts are provided by C344, C347, C351, and C364. FAD-binding residues include A396, E415, Q423, K433, and A460.

In the N-terminal section; belongs to the NADH:flavin oxidoreductase/NADH oxidase family. Homohexamer. FMN serves as cofactor. Requires FAD as cofactor. The cofactor is [4Fe-4S] cluster. The N-terminus is blocked.

It carries out the reaction A + NADH + H(+) = AH2 + NAD(+). Reduces a range of alternative electron acceptors. This chain is NADH oxidase, found in Thermoanaerobacter brockii (Thermoanaerobium brockii).